Here is a 509-residue protein sequence, read N- to C-terminus: MPSLRLLAILTTLLAVVLMATQSSATRTTRRPKPQNTKKPPRGGGTGGGGGGGDQPARLGFRQTTTTMSPSSSLGTDETTEDTMTDAYSLSPTDSTTYAGDAYPTEFHTDSMALPGAGMGNYTLDYSHCYLNVCECCPPEKGPVGPPGERGPPGPGAERAPAVPSETLALMLGTDIYTHTFKIPILLSFYLIGDKGDQGDTGMPGAPGILGKEGQKGDLGPKGEKGETGLPGLKGDLGERGKPGWNGTQGEKGDLGKIGPAGPSGLTGPMGQNGQKGEMGECPTGEKGEKGEAGLPGPPGPRGSVGPPGVNGSNGLPGPVGLRGQLGSPGGKGEAGGRGPPGLRGMPGPKGEKGPKGPRGVRGPKGPQGETAEQIRSAFSVGLFPSKSFPPPGLPVKFDKVLYNEEEHWDPMLSKFNCTHPGVYVFSYHITVRNRPLRAALVINGVKKLRTRDSLYGQDIDQASNLALLRLASGDQVWLETLRDWNGVYSSSEDDSTFTGFLLYADPKA.

Residues 1–25 (MPSLRLLAILTTLLAVVLMATQSSA) form the signal peptide. Positions 23–96 (SSATRTTRRP…AYSLSPTDST (74 aa)) are disordered. The segment covering 42-54 (RGGGTGGGGGGGD) has biased composition (gly residues). The segment covering 62 to 75 (RQTTTTMSPSSSLG) has biased composition (polar residues). N-linked (GlcNAc...) asparagine glycosylation occurs at Asn-121. Positions 193–244 (GDKGDQGDTGMPGAPGILGKEGQKGDLGPKGEKGETGLPGLKGDLGERGKPG) constitute a Collagen-like 1 domain. A disordered region spans residues 202–372 (GMPGAPGILG…GPKGPQGETA (171 aa)). Basic and acidic residues predominate over residues 213-227 (EGQKGDLGPKGEKGE). N-linked (GlcNAc...) asparagine glycans are attached at residues Asn-246 and Asn-311. The Collagen-like 2 domain occupies 285-329 (GEKGEKGEAGLPGPPGPRGSVGPPGVNGSNGLPGPVGLRGQLGSP). Positions 302–322 (RGSVGPPGVNGSNGLPGPVGL) are enriched in low complexity. Gly residues predominate over residues 327 to 342 (GSPGGKGEAGGRGPPG). The 138-residue stretch at 372–509 (AEQIRSAFSV…GFLLYADPKA (138 aa)) folds into the C1q domain. Residue Asn-417 is glycosylated (N-linked (GlcNAc...) asparagine).

The protein belongs to the OTOL1 family. Homooligomer; disulfide-linked; probably forms homotrimers. Interacts with otomp.

The protein localises to the secreted. Its subcellular location is the extracellular space. It localises to the extracellular matrix. Its function is as follows. Collagen-like protein, which provides an organic scaffold for otoliths onto the sensory epithelium of the inner ear. Acts as a scaffold for biomineralization by sequestering calcium. The chain is Otolin-1 (Otol1) from Oncorhynchus mykiss (Rainbow trout).